Consider the following 325-residue polypeptide: Delta(1)-pyrroline-2-carboxylate reductase (325 aa).

The protein belongs to the ornithine cyclodeaminase/mu-crystallin family.

The enzyme catalyses L-proline + NAD(+) = 1-pyrroline-2-carboxylate + NADH + H(+). The catalysed reaction is L-proline + NADP(+) = 1-pyrroline-2-carboxylate + NADPH + H(+). Catalyzes the reduction of Delta(1)-pyrroline-2-carboxylate (Pyr2C) to L-proline, using preferentially NADPH over NADH as the electron donor. Is likely involved in a degradation pathway that converts trans-3-hydroxy-L-proline (t3LHyp) to L-proline. In Bacillus cereus (strain ATCC 10987 / NRS 248), this protein is Delta(1)-pyrroline-2-carboxylate reductase.